Here is a 335-residue protein sequence, read N- to C-terminus: Succinylglutamate desuccinylase (335 aa).

3 residues coordinate Zn(2+): His-59, Glu-62, and His-151. Residue Glu-215 is part of the active site.

It belongs to the AspA/AstE family. Succinylglutamate desuccinylase subfamily. Zn(2+) is required as a cofactor.

It carries out the reaction N-succinyl-L-glutamate + H2O = L-glutamate + succinate. The protein operates within amino-acid degradation; L-arginine degradation via AST pathway; L-glutamate and succinate from L-arginine: step 5/5. In terms of biological role, transforms N(2)-succinylglutamate into succinate and glutamate. The polypeptide is Succinylglutamate desuccinylase (Pseudomonas putida (strain ATCC 47054 / DSM 6125 / CFBP 8728 / NCIMB 11950 / KT2440)).